Here is a 243-residue protein sequence, read N- to C-terminus: Sugar fermentation stimulation protein homolog (243 aa).

It belongs to the SfsA family.

In Lacticaseibacillus casei (strain BL23) (Lactobacillus casei), this protein is Sugar fermentation stimulation protein homolog.